A 458-amino-acid chain; its full sequence is UDP-N-acetylmuramoylalanine--D-glutamate ligase (458 aa).

124–130 (GSDGKTT) lines the ATP pocket.

This sequence belongs to the MurCDEF family.

The protein localises to the cytoplasm. The catalysed reaction is UDP-N-acetyl-alpha-D-muramoyl-L-alanine + D-glutamate + ATP = UDP-N-acetyl-alpha-D-muramoyl-L-alanyl-D-glutamate + ADP + phosphate + H(+). It participates in cell wall biogenesis; peptidoglycan biosynthesis. Its function is as follows. Cell wall formation. Catalyzes the addition of glutamate to the nucleotide precursor UDP-N-acetylmuramoyl-L-alanine (UMA). The chain is UDP-N-acetylmuramoylalanine--D-glutamate ligase from Clostridium kluyveri (strain NBRC 12016).